The sequence spans 417 residues: MESSTQTKPGSLIVVGTGIESIGQMTLQALSYIEAASKVFYCVIDPATEAFILTKNKNCVDLYQYYDNGKSRMDTYTQMAELMLKEVRNGLDVVGVFYGHPGVFVNPSHRALAIARSEGYQARMLPGVSAEDCLFADLCIDPSNPGCLTYEASDFLIRERPVNVHSHLILFQVGCVGIADFNFSGFDNSKFTILVDRLEQEYGPDHTVVHYIAAMMPHQDPVTDKFTIGQLREPEIAKRVGGVSTFYIPPKARKDINTDIIRLLEFLPAGKVPDKHTQIYPPNQWEPDVPTLPPYGQNEQAAITRLEAHAPPEEYQPLATSKAMTDVMTKLALDPKALAEYKADHRAFAQSVPDLTPQERAALELGDSWAIRCAMKNMPSSLLEAASQSVEEASMNGFPWVIVTGIVGVIGSVVSSA.

The interval 1-251 (MESSTQTKPG…GVSTFYIPPK (251 aa)) is methyltransferase domain. Residues Arg72, Tyr76, and Tyr98 contribute to the active site. 8 residues coordinate S-adenosyl-L-methionine: Tyr98, His100, Val103, Ala130, Gln172, Ala213, Ser244, and Thr245. Positions 252–378 (ARKDINTDII…WAIRCAMKNM (127 aa)) are clasp domain. The precursor leader stretch occupies residues 379–399 (PSSLLEAASQSVEEASMNGFP). N-methylvaline occurs at positions 401 and 403. Thr404 carries the post-translational modification N-methylthreonine. At Gly405 the chain carries N-methylglycine. Ile406 is subject to N-methylisoleucine. The residue at position 407 (Val407) is an N-methylvaline. Gly408 carries the post-translational modification N-methylglycine. Ile410 is modified (N-methylisoleucine). Gly411 carries the N-methylglycine modification. Val413 carries the N-methylvaline modification.

In the N-terminal section; belongs to the precorrin methyltransferase family. As to quaternary structure, homodimer. Post-translationally, dbiMA automethylates at Val-401, Val-403, Thr-404, Gly-405, Ile-406, Val-407, Gly-408, Ile-410, Gly-411 and Val-413 before being processed by the prolyloligopeptidase dbiP which likely forms a peptidyl ester upon removal of the follower propeptide, which then undergoes macrocyclization with the N-terminus of the modified core peptide. Peptide backbone alpha-N-methylations change the physicochemical properties of amide bonds to provide structural constraints and other favorable characteristics including biological membrane permeability to peptides.

It functions in the pathway mycotoxin biosynthesis. Fusion protein of the methyltransferase dbiM and the dendrothelin core peptide; part of the gene cluster that mediates the biosynthesis of dendrothelin A, a highly methylated cyclic dodecapeptide showing slight nematodicidal activity. Dendrothelin A derives from the C-terminus of the dbiMA protein, and it is the dbiMA protein that methylates its own C-terminus using S-adenosyl methionine (SAM). The C-terminus is subsequently cleaved off and macrocyclized by the prolyloligopeptidase dbiP to give the final product. This chain is Methyltransferase/ribosomally synthesized cyclic peptide dendrothelin A precursor dbihMA, found in Dendrothele bispora (strain CBS 962.96).